The following is a 1080-amino-acid chain: Myocardin-related transcription factor B (1080 aa).

Residues 40–65 form an RPEL 1 repeat; that stretch reads EVLQLRLQQRRTREQLVDQGIMPPLK. Serine 66 is subject to Phosphoserine. RPEL repeat units follow at residues 84–109 and 128–153; these read NFLK…EETF and DDLN…PVDS. 4 disordered regions span residues 170-222, 234-311, 352-384, and 477-501; these read THGE…AQFT, TPLT…EPQM, PIKT…SSLD, and PHVE…LSTD. 2 stretches are compositionally biased toward polar residues: residues 188 to 200 and 240 to 259; these read QPAS…SAAS and QPPT…SSAK. A compositionally biased stretch (basic and acidic residues) spans 272 to 287; sequence NPNDKHRSKKCKDPKP. Residues 358–370 show a composition bias toward low complexity; sequence NSSSGSNSGSSSS. Positions 383 to 417 constitute an SAP domain; the sequence is LDDLKVSELKTELKLRGLPVSGTKPDLIERLKPYQ. A phosphoserine mark is found at serine 531, serine 535, and serine 537. Positions 539–594 form a coiled coil; that stretch reads SSSTLSTLELDAAEKDRKLQEKEKQIEELKRKLEQEQKLVEVLKMQLEVEKRGQQR. The required for interaction with itself and with MRTFA stretch occupies residues 557-585; that stretch reads LQEKEKQIEELKRKLEQEQKLVEVLKMQL. 2 disordered regions span residues 588–646 and 794–846; these read EKRG…SVGQ and LQYQ…PQQF. Pro residues predominate over residues 595-606; sequence PPDPQPSDPPHP. Lysine 622 is covalently cross-linked (Glycyl lysine isopeptide (Lys-Gly) (interchain with G-Cter in SUMO1)). The span at 794-821 shows a compositional bias: polar residues; the sequence is LQYQRQPGPTNQQPFVSKTSNPALQSRT. The residue at position 913 (serine 913) is a Phosphoserine. Positions 969–988 are disordered; that stretch reads GTLPSATDTGPLQNSSEDRE. The segment covering 972-983 has biased composition (polar residues); sequence PSATDTGPLQNS.

As to quaternary structure, interacts with MRTFA and SRF. O-glycosylated. As to expression, widely expressed. High expression in heart, brain and testis. Lower expression in lung, liver and kidney.

It localises to the nucleus. Functionally, acts as a transcriptional coactivator of serum response factor (SRF). Required for skeletal myogenic differentiation. The chain is Myocardin-related transcription factor B (Mrtfb) from Mus musculus (Mouse).